The sequence spans 486 residues: Cobyric acid synthase (486 aa).

The region spanning 248-435 (VLNVVVPVLP…LHGLFESPAA (188 aa)) is the GATase cobBQ-type domain. Catalysis depends on cysteine 329, which acts as the Nucleophile. Residue histidine 427 is part of the active site.

It belongs to the CobB/CobQ family. CobQ subfamily.

Its pathway is cofactor biosynthesis; adenosylcobalamin biosynthesis. Catalyzes amidations at positions B, D, E, and G on adenosylcobyrinic A,C-diamide. NH(2) groups are provided by glutamine, and one molecule of ATP is hydrogenolyzed for each amidation. The chain is Cobyric acid synthase from Pseudomonas syringae pv. tomato (strain ATCC BAA-871 / DC3000).